Consider the following 485-residue polypeptide: Chitin synthase regulator 2 (485 aa).

7 Sel1-like repeats span residues 164–202 (PDAQYFLADCYANGIGTARGKQDFDRAFPLFILAAKHGH), 203–238 (PDACYRAGTCCEHGWGCRRDSAKAVSFYKKAAVGLH), 239–275 (PGAMYRLGTAELNGALGFPRRPKEGVKWLKRSAEHAT), 279–316 (PHALHELALLHERGIENVVFVDNDYAAELLAQSAELGY), 317–353 (APSAFKLGECYEYGKMGCPVDPALSIHYYNISAQQDH), 354–391 (KDACFALTAWYLVGSPGVLPQSDTEAYLWAKKAAELGL), and 392–427 (AKAQYAVGYFTETGIGIEANPQAALTWYKQAAEGGD). The interval 460–485 (AANLAQRSGSGSGASGKDGKDGCLIM) is disordered. Over residues 476–485 (KDGKDGCLIM) the composition is skewed to basic and acidic residues. Cysteine 482 is modified (cysteine methyl ester). Cysteine 482 carries the S-farnesyl cysteine lipid modification. Residues 483-485 (LIM) constitute a propeptide, removed in mature form.

This sequence belongs to the SKT5 family.

It localises to the cell membrane. Activator of the chitin synthase CHS3 which polymerizes chitin, a structural polymer of the fungal cell wall. Chitin produced by CHS3 is deacetylated to chitosan, which helps to maintain cell wall integrity, anchor melanin, and offers an advantage during infection, as chitosan is less readily detected by host immunosurveillance. The polypeptide is Chitin synthase regulator 2 (Cryptococcus neoformans var. grubii serotype A (strain H99 / ATCC 208821 / CBS 10515 / FGSC 9487) (Filobasidiella neoformans var. grubii)).